The following is a 241-amino-acid chain: NAD-dependent protein deacylase (241 aa).

Residues 1–237 form the Deacetylase sirtuin-type domain; it reads MNFPYRNIVV…PKLVDEILAL (237 aa). 13 to 32 is a binding site for NAD(+); that stretch reads GAGISAESGIQTFRAQDGLW. 2 residues coordinate substrate: Y57 and R60. Residue 94–97 coordinates NAD(+); the sequence is QNID. H112 functions as the Proton acceptor in the catalytic mechanism. The Zn(2+) site is built by C120 and C139. NAD(+) is bound by residues 179–181, 205–207, and A223; these read GTS and NLE.

This sequence belongs to the sirtuin family. Class III subfamily. As to quaternary structure, monomer. It depends on Zn(2+) as a cofactor.

The protein resides in the cytoplasm. Its subcellular location is the host cytoplasm. It localises to the host cytosol. The protein localises to the host nucleus. The catalysed reaction is N(6)-acetyl-L-lysyl-[protein] + NAD(+) + H2O = 2''-O-acetyl-ADP-D-ribose + nicotinamide + L-lysyl-[protein]. It carries out the reaction N(6)-succinyl-L-lysyl-[protein] + NAD(+) + H2O = 2''-O-succinyl-ADP-D-ribose + nicotinamide + L-lysyl-[protein]. NAD-dependent lysine deacetylase and desuccinylase that specifically removes acetyl and succinyl groups on target proteins. Modulates the activities of several proteins which are inactive in their acylated form. In the intracellular pathogen V.parahaemolyticus, this enzyme regulates host response during infection by induction of host histone deacetylation; it specifically causes deacetylation of histone lysine residues H3K56, H3K9, H3K18 and H4K16 which results in transcriptional repression of several host genes involved in epigenetic regulation, immune response, and autophagy. In Vibrio parahaemolyticus serotype O3:K6 (strain RIMD 2210633), this protein is NAD-dependent protein deacylase.